The primary structure comprises 130 residues: UPF0102 protein TDE_2303 (130 aa).

This sequence belongs to the UPF0102 family.

The sequence is that of UPF0102 protein TDE_2303 from Treponema denticola (strain ATCC 35405 / DSM 14222 / CIP 103919 / JCM 8153 / KCTC 15104).